The chain runs to 276 residues: Diaminopimelate epimerase (276 aa).

Substrate is bound by residues Asn13, Gln46, and Asn66. Catalysis depends on Cys75, which acts as the Proton donor. Substrate-binding positions include 76–77, Asn159, Asn192, and 210–211; these read GN and ER. Cys219 serves as the catalytic Proton acceptor. 220-221 contacts substrate; the sequence is GT.

It belongs to the diaminopimelate epimerase family. In terms of assembly, homodimer.

Its subcellular location is the cytoplasm. The enzyme catalyses (2S,6S)-2,6-diaminopimelate = meso-2,6-diaminopimelate. Its pathway is amino-acid biosynthesis; L-lysine biosynthesis via DAP pathway; DL-2,6-diaminopimelate from LL-2,6-diaminopimelate: step 1/1. In terms of biological role, catalyzes the stereoinversion of LL-2,6-diaminopimelate (L,L-DAP) to meso-diaminopimelate (meso-DAP), a precursor of L-lysine and an essential component of the bacterial peptidoglycan. In Pseudomonas entomophila (strain L48), this protein is Diaminopimelate epimerase.